Reading from the N-terminus, the 206-residue chain is RILP-like protein 2 (206 aa).

The disordered stretch occupies residues 1-29; the sequence is MEEPPLREEEEEEEEDEAGPEGALGKSPL. A compositionally biased stretch (acidic residues) spans 8-19; the sequence is EEEEEEEEDEAG. The 90-residue stretch at 19–108 folds into the RH1 domain; that stretch reads GPEGALGKSP…RREGSAAGPE (90 aa). A coiled-coil region spans residues 67–159; sequence LEMLETLVNE…VQEELQCYKS (93 aa). One can recognise an RH2 domain in the interval 125–197; the sequence is RPRFTLQELR…KEEKTIIRKL (73 aa). The interval 161-189 is disordered; it reads LIPPREGPGGRREKEALFPRGSNANSNKE. The segment covering 168–177 has biased composition (basic and acidic residues); it reads PGGRREKEAL.

The protein belongs to the RILPL family. In terms of assembly, homodimer. Interacts with RAC1. Interacts (via N-terminus) with MYO5A, the interaction is required for its role in dendrite formation. Interacts with RAB8A; interaction is dependent on the phosphorylation of RAB8A on 'Thr-72'. Interacts with RAB10 and RAB12; interaction is dependent on the phosphorylation of 'Thr-73' on RAB10 and 'Ser-105' on RAB12.

It is found in the cytoplasm. Its subcellular location is the cytosol. The protein resides in the cytoskeleton. The protein localises to the microtubule organizing center. It localises to the centrosome. It is found in the cell projection. Its subcellular location is the cilium. Involved in cell shape and neuronal morphogenesis, positively regulating the establishment and maintenance of dendritic spines. Plays a role in cellular protein transport, including protein transport away from primary cilia. May function via activation of RAC1 and PAK1. In Bos taurus (Bovine), this protein is RILP-like protein 2 (RILPL2).